Reading from the N-terminus, the 124-residue chain is Large ribosomal subunit protein bL19 (124 aa).

It belongs to the bacterial ribosomal protein bL19 family.

In terms of biological role, this protein is located at the 30S-50S ribosomal subunit interface and may play a role in the structure and function of the aminoacyl-tRNA binding site. The chain is Large ribosomal subunit protein bL19 from Orientia tsutsugamushi (strain Ikeda) (Rickettsia tsutsugamushi).